The following is a 250-amino-acid chain: Triosephosphate isomerase (250 aa).

Position 9–11 (9–11 (NWK)) interacts with substrate. The active-site Electrophile is His94. The active-site Proton acceptor is Glu166. Residues Gly172, Ser212, and 233 to 234 (GG) each bind substrate.

Belongs to the triosephosphate isomerase family. Homodimer.

It is found in the cytoplasm. The enzyme catalyses D-glyceraldehyde 3-phosphate = dihydroxyacetone phosphate. Its pathway is carbohydrate biosynthesis; gluconeogenesis. It participates in carbohydrate degradation; glycolysis; D-glyceraldehyde 3-phosphate from glycerone phosphate: step 1/1. In terms of biological role, involved in the gluconeogenesis. Catalyzes stereospecifically the conversion of dihydroxyacetone phosphate (DHAP) to D-glyceraldehyde-3-phosphate (G3P). The sequence is that of Triosephosphate isomerase from Clostridium novyi (strain NT).